Reading from the N-terminus, the 164-residue chain is Phospholipase A and acyltransferase 4 (164 aa).

Positions methionine 1–serine 40 are essential for its ability regulate keratinocyte differentiation. The Cytoplasmic portion of the chain corresponds to methionine 1–lysine 134. Residues leucine 13 to glutamine 129 form the LRAT domain. Catalysis depends on residues histidine 23 and histidine 35. Cysteine 113 (acyl-thioester intermediate) is an active-site residue. The interval lysine 124–alanine 164 is interaction with TGM1. A helical transmembrane segment spans residues valine 135–isoleucine 155. Topologically, residues arginine 156–alanine 164 are lumenal.

The protein belongs to the H-rev107 family. In terms of assembly, interacts with TGM1. As to expression, widely expressed.

The protein resides in the membrane. The enzyme catalyses a 1,2-diacyl-sn-glycero-3-phosphocholine + H2O = a 1-acyl-sn-glycero-3-phosphocholine + a fatty acid + H(+). It catalyses the reaction a 1,2-diacyl-sn-glycero-3-phosphocholine + H2O = a 2-acyl-sn-glycero-3-phosphocholine + a fatty acid + H(+). It carries out the reaction 1,2-dihexadecanoyl-sn-glycero-3-phosphocholine + H2O = 1-hexadecanoyl-sn-glycero-3-phosphocholine + hexadecanoate + H(+). The catalysed reaction is 1,2-dihexadecanoyl-sn-glycero-3-phosphocholine + H2O = 2-hexadecanoyl-sn-glycero-3-phosphocholine + hexadecanoate + H(+). The enzyme catalyses 1-hexadecanoyl-2-(9Z-octadecenoyl)-sn-glycero-3-phosphocholine + H2O = 2-(9Z-octadecenoyl)-sn-glycero-3-phosphocholine + hexadecanoate + H(+). It catalyses the reaction 1-hexadecanoyl-2-(9Z-octadecenoyl)-sn-glycero-3-phosphocholine + H2O = 1-hexadecanoyl-sn-glycero-3-phosphocholine + (9Z)-octadecenoate + H(+). It carries out the reaction 1-hexadecanoyl-2-(5Z,8Z,11Z,14Z-eicosatetraenoyl)-sn-glycero-3-phosphocholine + H2O = 2-(5Z,8Z,11Z,14Z)-eicosatetraenoyl-sn-glycero-3-phosphocholine + hexadecanoate + H(+). The catalysed reaction is 1-hexadecanoyl-2-(9Z,12Z-octadecadienoyl)-sn-glycero-3-phosphoethanolamine + H2O = 1-hexadecanoyl-sn-glycero-3-phosphoethanolamine + (9Z,12Z)-octadecadienoate + H(+). The enzyme catalyses 1-hexadecanoyl-2-(9Z,12Z-octadecadienoyl)-sn-glycero-3-phosphoethanolamine + H2O = 2-(9Z,12Z)-octadecadienoyl-sn-glycero-3-phosphoethanolamine + hexadecanoate + H(+). It catalyses the reaction 1-hexadecanoyl-2-(5Z,8Z,11Z,14Z-eicosatetraenoyl)-sn-glycero-3-phosphoethanolamine + H2O = 2-(5Z,8Z,11Z,14Z)-eicosatetraenoyl-sn-glycero-3-phosphoethanolamine + hexadecanoate + H(+). It carries out the reaction 1-hexanoyl-2-acyl-sn-glycero-3-phosphocholine + H2O = hexanoate + a 2-acyl-sn-glycero-3-phosphocholine + H(+). The catalysed reaction is 1,2-diheptadecanoyl-sn-glycero-3-phosphoethanolamine + 1-(9Z-octadecenoyl)-2-hexadecanoyl-sn-glycero-3-phosphocholine = 1,2-diheptadecanoyl-sn-glycero-3-phospho-N-hexadecanoyl-ethanolamine + 1-(9Z-octadecenoyl)-sn-glycero-3-phosphocholine + H(+). The enzyme catalyses 1,2-diheptadecanoyl-sn-glycero-3-phosphoethanolamine + 1-(9Z-octadecenoyl)-2-hexadecanoyl-sn-glycero-3-phosphocholine = 1,2-diheptadecanoyl-sn-glycero-3-phospho-N-(9Z-octadecenoyl)-ethanolamine + 2-hexadecanoyl-sn-glycero-3-phosphocholine + H(+). In terms of biological role, exhibits both phospholipase A1/2 and acyltransferase activities. Shows phospholipase A1 (PLA1) and A2 (PLA2), catalyzing the calcium-independent release of fatty acids from the sn-1 or sn-2 position of glycerophospholipids. For most substrates, PLA1 activity is much higher than PLA2 activity. Shows O-acyltransferase activity, catalyzing the transfer of a fatty acyl group from glycerophospholipid to the hydroxyl group of lysophospholipid. Shows N-acyltransferase activity, catalyzing the calcium-independent transfer of a fatty acyl group at the sn-1 position of phosphatidylcholine (PC) and other glycerophospholipids to the primary amine of phosphatidylethanolamine (PE), forming N-acylphosphatidylethanolamine (NAPE), which serves as precursor for N-acylethanolamines (NAEs). Promotes keratinocyte differentiation via activation of TGM1. In Homo sapiens (Human), this protein is Phospholipase A and acyltransferase 4.